The sequence spans 364 residues: Aminomethyltransferase (364 aa).

This sequence belongs to the GcvT family. The glycine cleavage system is composed of four proteins: P, T, L and H.

The enzyme catalyses N(6)-[(R)-S(8)-aminomethyldihydrolipoyl]-L-lysyl-[protein] + (6S)-5,6,7,8-tetrahydrofolate = N(6)-[(R)-dihydrolipoyl]-L-lysyl-[protein] + (6R)-5,10-methylene-5,6,7,8-tetrahydrofolate + NH4(+). In terms of biological role, the glycine cleavage system catalyzes the degradation of glycine. The sequence is that of Aminomethyltransferase from Thermotoga petrophila (strain ATCC BAA-488 / DSM 13995 / JCM 10881 / RKU-1).